A 409-amino-acid chain; its full sequence is N-acetylglucosamine-6-phosphate deacetylase (409 aa).

Glu143 serves as a coordination point for a divalent metal cation. Residue 154–155 (AH) participates in substrate binding. 2 residues coordinate a divalent metal cation: His211 and His232. Residues 235-236 (NA), Arg243, and 269-272 (DGIH) contribute to the substrate site. Asp294 functions as the Proton donor/acceptor in the catalytic mechanism. 328-330 (LGG) serves as a coordination point for substrate.

Belongs to the metallo-dependent hydrolases superfamily. NagA family. A divalent metal cation serves as cofactor.

The enzyme catalyses N-acetyl-D-glucosamine 6-phosphate + H2O = D-glucosamine 6-phosphate + acetate. It participates in amino-sugar metabolism; N-acetylneuraminate degradation. In terms of biological role, hydrolyzes the N-glycolyl group from N-glycolylglucosamine 6-phosphate (GlcNGc-6-P) in the N-glycolylneuraminic acid (Neu5Gc) degradation pathway. This chain is N-acetylglucosamine-6-phosphate deacetylase (Amdhd2), found in Mus musculus (Mouse).